Consider the following 441-residue polypeptide: GTPase Der (441 aa).

EngA-type G domains lie at 4 to 169 (PIVA…PEGS) and 178 to 353 (PKVA…DAQT). GTP-binding positions include 10–17 (GRPNVGKS), 57–61 (DTGGI), 120–123 (NKVD), 184–191 (GKPNVGKS), 231–235 (DTAGL), and 296–299 (NKWD). The region spanning 354–438 (MRIPTGVLNE…SIRFINRERK (85 aa)) is the KH-like domain.

The protein belongs to the TRAFAC class TrmE-Era-EngA-EngB-Septin-like GTPase superfamily. EngA (Der) GTPase family. Associates with the 50S ribosomal subunit.

Functionally, GTPase that plays an essential role in the late steps of ribosome biogenesis. The polypeptide is GTPase Der (Lachnospira eligens (strain ATCC 27750 / DSM 3376 / VPI C15-48 / C15-B4) (Eubacterium eligens)).